The following is a 503-amino-acid chain: AMP phosphorylase (503 aa).

AMP-binding positions include Gly168, 194-199 (SRAITS), and Thr203. The active-site Proton donor is Asp256. Ser264 and Lys288 together coordinate AMP.

This sequence belongs to the thymidine/pyrimidine-nucleoside phosphorylase family. Type 2 subfamily. In terms of assembly, forms an exceptionally large macromolecular structure (&gt;40-mers) in solution.

It carries out the reaction AMP + phosphate = alpha-D-ribose 1,5-bisphosphate + adenine. The catalysed reaction is CMP + phosphate = cytosine + alpha-D-ribose 1,5-bisphosphate. The enzyme catalyses UMP + phosphate = alpha-D-ribose 1,5-bisphosphate + uracil. With respect to regulation, AMP phosphorolysis is allosterically regulated by the substrate AMP. Functionally, catalyzes the conversion of AMP and phosphate to adenine and ribose 1,5-bisphosphate (R15P). Exhibits phosphorylase activity toward CMP, dCMP and UMP in addition to AMP. Functions in an archaeal AMP degradation pathway, together with R15P isomerase and RubisCO. This chain is AMP phosphorylase, found in Thermococcus kodakarensis (strain ATCC BAA-918 / JCM 12380 / KOD1) (Pyrococcus kodakaraensis (strain KOD1)).